A 335-amino-acid chain; its full sequence is Fructose-1,6-bisphosphatase class 1 (335 aa).

Residues Glu89, Asp112, Leu114, and Asp115 each coordinate Mg(2+). Substrate-binding positions include 115 to 118 (DGSS), Asn208, Tyr241, and Lys271. Glu277 is a binding site for Mg(2+).

The protein belongs to the FBPase class 1 family. As to quaternary structure, homotetramer. Mg(2+) is required as a cofactor.

It localises to the cytoplasm. The enzyme catalyses beta-D-fructose 1,6-bisphosphate + H2O = beta-D-fructose 6-phosphate + phosphate. Its pathway is carbohydrate biosynthesis; gluconeogenesis. This chain is Fructose-1,6-bisphosphatase class 1, found in Proteus mirabilis (strain HI4320).